The chain runs to 149 residues: D-aminoacyl-tRNA deacylase (149 aa).

Residues 137-138 carry the Gly-cisPro motif, important for rejection of L-amino acids motif; the sequence is GP.

It belongs to the DTD family. Homodimer.

The protein resides in the cytoplasm. The catalysed reaction is glycyl-tRNA(Ala) + H2O = tRNA(Ala) + glycine + H(+). The enzyme catalyses a D-aminoacyl-tRNA + H2O = a tRNA + a D-alpha-amino acid + H(+). In terms of biological role, an aminoacyl-tRNA editing enzyme that deacylates mischarged D-aminoacyl-tRNAs. Also deacylates mischarged glycyl-tRNA(Ala), protecting cells against glycine mischarging by AlaRS. Acts via tRNA-based rather than protein-based catalysis; rejects L-amino acids rather than detecting D-amino acids in the active site. By recycling D-aminoacyl-tRNA to D-amino acids and free tRNA molecules, this enzyme counteracts the toxicity associated with the formation of D-aminoacyl-tRNA entities in vivo and helps enforce protein L-homochirality. The chain is D-aminoacyl-tRNA deacylase from Clostridium botulinum (strain Eklund 17B / Type B).